The sequence spans 336 residues: Mitochondrial import receptor subunit TOM40 homolog (336 aa).

The interval 1–58 (MGNVLAASSPAPPPAGSPPVPGLVSVPPGFTMPPVAGLTPTPDKKEPQEERLPNPGTF) is disordered. A compositionally biased stretch (pro residues) spans 10 to 21 (PAPPPAGSPPVP). Over residues 42–52 (PDKKEPQEERL) the composition is skewed to basic and acidic residues.

Belongs to the Tom40 family. Forms part of the preprotein translocase complex of the outer mitochondrial membrane (TOM complex). Interacts with mitochondrial targeting sequences.

It localises to the mitochondrion outer membrane. Functionally, channel-forming protein essential for import of protein precursors into mitochondria. This Xenopus laevis (African clawed frog) protein is Mitochondrial import receptor subunit TOM40 homolog (tomm40).